The sequence spans 142 residues: Spliceosomal protein DIB1 (142 aa).

This sequence belongs to the DIM1 family. As to quaternary structure, component of the 25S [U4/U6.U5] tri-snRNP.

The protein resides in the nucleus. Its function is as follows. Essential role in pre-mRNA splicing. Also essential for entry into mitosis (G2/M progression) as well as for chromosome segregation during mitosis. The polypeptide is Spliceosomal protein DIB1 (DIB1) (Candida glabrata (strain ATCC 2001 / BCRC 20586 / JCM 3761 / NBRC 0622 / NRRL Y-65 / CBS 138) (Yeast)).